The sequence spans 69 residues: Putative membrane protein insertion efficiency factor (69 aa).

The protein belongs to the UPF0161 family.

Its subcellular location is the cell membrane. Functionally, could be involved in insertion of integral membrane proteins into the membrane. This chain is Putative membrane protein insertion efficiency factor, found in Clostridium beijerinckii (strain ATCC 51743 / NCIMB 8052) (Clostridium acetobutylicum).